The following is a 108-amino-acid chain: Signal recognition particle 19 kDa protein (108 aa).

The protein belongs to the SRP19 family. In terms of assembly, part of the signal recognition particle protein translocation system, which is composed of SRP and FtsY. Archaeal SRP consists of a 7S RNA molecule of 300 nucleotides and two protein subunits: SRP54 and SRP19.

It is found in the cytoplasm. Its function is as follows. Involved in targeting and insertion of nascent membrane proteins into the cytoplasmic membrane. Binds directly to 7S RNA and mediates binding of the 54 kDa subunit of the SRP. In Thermococcus kodakarensis (strain ATCC BAA-918 / JCM 12380 / KOD1) (Pyrococcus kodakaraensis (strain KOD1)), this protein is Signal recognition particle 19 kDa protein.